Consider the following 88-residue polypeptide: KTx type I (88 aa).

Positions 1-19 (MKTTLVVVVLACIVALTSA) are cleaved as a signal peptide. The ShKT domain maps to 54 to 88 (CKDVLSEFSCGVLKKDGQCNKADIQAKCKLTCDKC). Cystine bridges form between C54/C88, C63/C81, and C72/C85.

The protein belongs to the sea anemone type 1 potassium channel toxin family. Expressed both outside and in acontia, a specialised envenomation structure laden with batteries of venom-containing nematocysts found only in the superfamily Metridioidea.

The protein localises to the secreted. It localises to the nematocyst. In terms of biological role, inhibits voltage-gated potassium channels (Kv1/KCNA). The protein is KTx type I of Calliactis polypus (Hermit crab anemone).